Reading from the N-terminus, the 37-residue chain is Alpha-conotoxin-like Kn1.2 (37 aa).

Over residues 1 to 15 (ESDGAHAKARADKPA) the composition is skewed to basic and acidic residues. Residues 1–22 (ESDGAHAKARADKPARSATNRQ) constitute a propeptide that is removed on maturation. The interval 1 to 23 (ESDGAHAKARADKPARSATNRQP) is disordered. Intrachain disulfides connect Cys25–Cys31 and Cys26–Cys36. Cys36 carries the cysteine amide modification.

Belongs to the conotoxin A superfamily. Expressed by the venom duct.

It localises to the secreted. Its function is as follows. Alpha-conotoxins act on postsynaptic membranes, they bind to the nicotinic acetylcholine receptors (nAChR) and thus inhibit them. This toxin inhibits high voltage-activated (HVA) calcium channel currents in rat DRG neurons (13% inhibition at 1 uM toxin) probably by activating GABA(B) receptors (GABBR1 and/or GABBR2). This Conus kinoshitai (Kinoshita's cone) protein is Alpha-conotoxin-like Kn1.2.